Reading from the N-terminus, the 504-residue chain is Maturase K (504 aa).

The protein belongs to the intron maturase 2 family. MatK subfamily.

It is found in the plastid. It localises to the chloroplast. Functionally, usually encoded in the trnK tRNA gene intron. Probably assists in splicing its own and other chloroplast group II introns. The protein is Maturase K of Gossypium gossypioides (Mexican cotton).